Consider the following 544-residue polypeptide: Chaperonin GroEL (544 aa).

ATP contacts are provided by residues 30–33, 87–91, glycine 414, 478–480, and aspartate 494; these read TLGP, DGTTT, and NAL.

The protein belongs to the chaperonin (HSP60) family. In terms of assembly, forms a cylinder of 14 subunits composed of two heptameric rings stacked back-to-back. Interacts with the co-chaperonin GroES.

The protein localises to the cytoplasm. It catalyses the reaction ATP + H2O + a folded polypeptide = ADP + phosphate + an unfolded polypeptide.. Together with its co-chaperonin GroES, plays an essential role in assisting protein folding. The GroEL-GroES system forms a nano-cage that allows encapsulation of the non-native substrate proteins and provides a physical environment optimized to promote and accelerate protein folding. The sequence is that of Chaperonin GroEL from Pelotomaculum thermopropionicum (strain DSM 13744 / JCM 10971 / SI).